We begin with the raw amino-acid sequence, 717 residues long: Probable cyclic nucleotide-gated ion channel 5 (717 aa).

The Cytoplasmic portion of the chain corresponds to 1–102; that stretch reads MAGKRENFVR…DKFLLYCNKL (102 aa). Residues 103 to 123 form a helical membrane-spanning segment; it reads FVASCILSVFVDPFFFYLPVI. Topologically, residues 124–136 are extracellular; that stretch reads NAESKCLGIDRKL. The chain crosses the membrane as a helical span at residues 137-157; that stretch reads AITASTLRTFIDVFYLAHMAL. Residues 158–190 lie on the Cytoplasmic side of the membrane; the sequence is QLRTAYIAPSSRVFGRGELVIDPAQIAKRYLQR. Residues 191 to 211 form a helical membrane-spanning segment; sequence WFIIDFLSVLPLPQIVVWRFL. Residues 212 to 224 are Extracellular-facing; it reads QSSNGSDVLATKQ. Residues 225-245 traverse the membrane as a helical segment; sequence ALLFIVLVQYIPRFLRVLPLT. Over 246-265 the chain is Cytoplasmic; it reads SELKRTAGVFAETAWAGAAY. A helical transmembrane segment spans residues 266–286; sequence YLLLYMLASHIVGAFWYLLAL. The Extracellular portion of the chain corresponds to 287–391; that stretch reads ERNDACWQEA…GQGLETSTYP (105 aa). A helical membrane pass occupies residues 392-412; that stretch reads MEIIFSISLAISGLILFALLI. Residues 413 to 717 lie on the Cytoplasmic side of the membrane; it reads GNMQTYLQSL…KPPEPDFTAD (305 aa). Residues 498-628 and E569 each bind a nucleoside 3',5'-cyclic phosphate; that span reads LFKS…TFRF. Residues 614–629 are calmodulin-binding; that stretch reads FRRLHSRQVQHTFRFY. An IQ domain is found at 634–663; sequence RTWAACFIQAAWRRYCKRKKMEEAEAEAAA.

It belongs to the cyclic nucleotide-gated cation channel (TC 1.A.1.5) family. As to quaternary structure, homotetramer or heterotetramer.

It localises to the cell membrane. Its function is as follows. Probable cyclic nucleotide-gated ion channel. The chain is Probable cyclic nucleotide-gated ion channel 5 (CNGC5) from Arabidopsis thaliana (Mouse-ear cress).